Consider the following 310-residue polypeptide: Mycothiol acetyltransferase (310 aa).

2 N-acetyltransferase domains span residues 5-155 and 160-309; these read TTVE…HPAR and PPFR…LPAA. Position 80 to 82 (80 to 82) interacts with acetyl-CoA; sequence LLV. 3 residues coordinate 1D-myo-inositol 2-(L-cysteinylamino)-2-deoxy-alpha-D-glucopyranoside: Asp187, Lys226, and Glu238. Residue 242–244 participates in acetyl-CoA binding; it reads IAT. Position 276 (Tyr276) interacts with 1D-myo-inositol 2-(L-cysteinylamino)-2-deoxy-alpha-D-glucopyranoside. Residue 281–286 participates in acetyl-CoA binding; sequence NERALR.

Belongs to the acetyltransferase family. MshD subfamily. In terms of assembly, monomer.

The catalysed reaction is 1D-myo-inositol 2-(L-cysteinylamino)-2-deoxy-alpha-D-glucopyranoside + acetyl-CoA = mycothiol + CoA + H(+). Its function is as follows. Catalyzes the transfer of acetyl from acetyl-CoA to desacetylmycothiol (Cys-GlcN-Ins) to form mycothiol. The polypeptide is Mycothiol acetyltransferase (Acidimicrobium ferrooxidans (strain DSM 10331 / JCM 15462 / NBRC 103882 / ICP)).